Reading from the N-terminus, the 529-residue chain is Peptide chain release factor 3 (529 aa).

Positions 11–280 (SKRRTFAIIS…GLTEWAPAPK (270 aa)) constitute a tr-type G domain. GTP-binding positions include 20–27 (SHPDAGKT), 88–92 (DTPGH), and 142–145 (NKLD).

It belongs to the TRAFAC class translation factor GTPase superfamily. Classic translation factor GTPase family. PrfC subfamily.

Its subcellular location is the cytoplasm. Increases the formation of ribosomal termination complexes and stimulates activities of RF-1 and RF-2. It binds guanine nucleotides and has strong preference for UGA stop codons. It may interact directly with the ribosome. The stimulation of RF-1 and RF-2 is significantly reduced by GTP and GDP, but not by GMP. The polypeptide is Peptide chain release factor 3 (Vibrio parahaemolyticus serotype O3:K6 (strain RIMD 2210633)).